Here is a 272-residue protein sequence, read N- to C-terminus: NH(3)-dependent NAD(+) synthetase (272 aa).

Residue 45–52 (GISGGQDS) participates in ATP binding. A Mg(2+)-binding site is contributed by D51. R138 contributes to the deamido-NAD(+) binding site. T158 lines the ATP pocket. Position 163 (E163) interacts with Mg(2+). Positions 171 and 178 each coordinate deamido-NAD(+). ATP is bound by residues K187 and T209. Position 258–259 (258–259 (HK)) interacts with deamido-NAD(+).

This sequence belongs to the NAD synthetase family. In terms of assembly, homodimer.

It carries out the reaction deamido-NAD(+) + NH4(+) + ATP = AMP + diphosphate + NAD(+) + H(+). It functions in the pathway cofactor biosynthesis; NAD(+) biosynthesis; NAD(+) from deamido-NAD(+) (ammonia route): step 1/1. Catalyzes the ATP-dependent amidation of deamido-NAD to form NAD. Uses ammonia as a nitrogen source. The protein is NH(3)-dependent NAD(+) synthetase of Bacillus cereus (strain AH187).